A 101-amino-acid polypeptide reads, in one-letter code: Signal recognition particle 19 kDa protein (101 aa).

Belongs to the SRP19 family. In terms of assembly, part of the signal recognition particle protein translocation system, which is composed of SRP and FtsY. Archaeal SRP consists of a 7S RNA molecule of 300 nucleotides and two protein subunits: SRP54 and SRP19.

The protein resides in the cytoplasm. Its function is as follows. Involved in targeting and insertion of nascent membrane proteins into the cytoplasmic membrane. Binds directly to 7S RNA and mediates binding of the 54 kDa subunit of the SRP. This Thermofilum pendens (strain DSM 2475 / Hrk 5) protein is Signal recognition particle 19 kDa protein.